The following is an 870-amino-acid chain: Lon protease (870 aa).

The Lon N-terminal domain maps to 1–270 (MPTNSYRFLV…KLYEHIHTFA (270 aa)). Residue 454–461 (GPPGTGKT) coordinates ATP. One can recognise a Lon proteolytic domain in the interval 691–870 (SPQIGTVTGL…YQQIYDFIFK (180 aa)). Catalysis depends on residues Ser-777 and Lys-820.

It belongs to the peptidase S16 family. Homohexamer. Organized in a ring with a central cavity.

It localises to the cytoplasm. It carries out the reaction Hydrolysis of proteins in presence of ATP.. Functionally, ATP-dependent serine protease that mediates the selective degradation of mutant and abnormal proteins as well as certain short-lived regulatory proteins. Required for cellular homeostasis and for survival from DNA damage and developmental changes induced by stress. Degrades polypeptides processively to yield small peptide fragments that are 5 to 10 amino acids long. Binds to DNA in a double-stranded, site-specific manner. The sequence is that of Lon protease from Mesomycoplasma hyopneumoniae (strain 232) (Mycoplasma hyopneumoniae).